A 991-amino-acid polypeptide reads, in one-letter code: Integrator complex subunit 8 (991 aa).

The segment covering 1–10 (MSAEAADREA) has biased composition (basic and acidic residues). Residues 1–22 (MSAEAADREAATSSRPCTPPQT) form a disordered region. Residues 11-22 (ATSSRPCTPPQT) are compositionally biased toward polar residues. Positions 24–29 (WFEFLL) match the WFEF motif motif. TPR repeat units lie at residues 250 to 288 (CQGC…VSKI), 319 to 355 (SQPA…SLPD), 569 to 602 (VYIL…VTEF), and 829 to 862 (HSWL…CSDF).

Belongs to the Integrator subunit 8 family. As to quaternary structure, component of the Integrator complex, composed of core subunits INTS1, INTS2, INTS3, INTS4, INTS5, INTS6, INTS7, INTS8, INTS9/RC74, INTS10, INTS11/CPSF3L, INTS12, INTS13, INTS14 and INTS15. The core complex associates with protein phosphatase 2A subunits PPP2CA and PPP2R1A, to form the Integrator-PP2A (INTAC) complex.

It localises to the nucleus. The protein localises to the chromosome. Functionally, component of the integrator complex, a multiprotein complex that terminates RNA polymerase II (Pol II) transcription in the promoter-proximal region of genes. The integrator complex provides a quality checkpoint during transcription elongation by driving premature transcription termination of transcripts that are unfavorably configured for transcriptional elongation: the complex terminates transcription by (1) catalyzing dephosphorylation of the C-terminal domain (CTD) of Pol II subunit POLR2A/RPB1 and SUPT5H/SPT5, (2) degrading the exiting nascent RNA transcript via endonuclease activity and (3) promoting the release of Pol II from bound DNA. The integrator complex is also involved in terminating the synthesis of non-coding Pol II transcripts, such as enhancer RNAs (eRNAs), small nuclear RNAs (snRNAs), telomerase RNAs and long non-coding RNAs (lncRNAs). Within the integrator complex, INTS8 is required for the recruitment of protein phosphatase 2A (PP2A) to transcription pause-release checkpoint. The chain is Integrator complex subunit 8 (ints8) from Xenopus laevis (African clawed frog).